We begin with the raw amino-acid sequence, 510 residues long: ATP synthase subunit alpha (510 aa).

Residue 169 to 176 coordinates ATP; the sequence is GDRQTGKT.

Belongs to the ATPase alpha/beta chains family. In terms of assembly, F-type ATPases have 2 components, CF(1) - the catalytic core - and CF(0) - the membrane proton channel. CF(1) has five subunits: alpha(3), beta(3), gamma(1), delta(1), epsilon(1). CF(0) has three main subunits: a(1), b(2) and c(9-12). The alpha and beta chains form an alternating ring which encloses part of the gamma chain. CF(1) is attached to CF(0) by a central stalk formed by the gamma and epsilon chains, while a peripheral stalk is formed by the delta and b chains.

The protein resides in the cell inner membrane. The enzyme catalyses ATP + H2O + 4 H(+)(in) = ADP + phosphate + 5 H(+)(out). Produces ATP from ADP in the presence of a proton gradient across the membrane. The alpha chain is a regulatory subunit. This Rickettsia conorii (strain ATCC VR-613 / Malish 7) protein is ATP synthase subunit alpha.